A 422-amino-acid chain; its full sequence is Receptor homology region, transmembrane domain- and RING domain-containing protein 3 (422 aa).

The N-terminal stretch at 1 to 22 (MNLVVLLILTLLLFIVSYVVDA) is a signal peptide. Topologically, residues 23–168 (GQVILVDSNI…NTEDSVWSLY (146 aa)) are lumenal. Asn-31 carries N-linked (GlcNAc...) asparagine glycosylation. A disulfide bridge links Cys-64 with Cys-89. Positions 81-146 (LVLIIRGGCS…RAGEMLKKYA (66 aa)) constitute a PA domain. The helical transmembrane segment at 169-189 (ASIALILSLAIFCVMVTCVFF) threads the bilayer. Residues 190 to 422 (YRYCSTIRNS…HFASAHSLPD (233 aa)) lie on the Cytoplasmic side of the membrane. The RING-type; atypical zinc finger occupies 232 to 274 (CAICLEDYIVGDKLRVLPCSHKFHVACVDSWLISWRTFCPVCK). The interval 344-368 (LRRQASPLQSSSQRSHLSMKSSHSL) is disordered. A compositionally biased stretch (polar residues) spans 349 to 368 (SPLQSSSQRSHLSMKSSHSL).

It is found in the prevacuolar compartment membrane. Its subcellular location is the protein storage vacuole membrane. Involved in the trafficking of vacuolar proteins. May function as a sorting receptor for protein trafficking to the protein storage vacuole (PSV). This Arabidopsis thaliana (Mouse-ear cress) protein is Receptor homology region, transmembrane domain- and RING domain-containing protein 3 (RMR3).